Consider the following 130-residue polypeptide: Small ribosomal subunit protein uS9 (130 aa).

It belongs to the universal ribosomal protein uS9 family.

The polypeptide is Small ribosomal subunit protein uS9 (Alkalilimnicola ehrlichii (strain ATCC BAA-1101 / DSM 17681 / MLHE-1)).